The sequence spans 676 residues: MDDEETAEIDETSSSSTNTNTNATAMATATETAAEMHVELEQDEEIPQGSENGAGTGAGDGTRAEAGASAIHAETTAHVSSRARLENMIEEVDNMFEEVSELMVDVTELMRRANQLREDAGTGAVPQNPTVATNTTPPAEIEEEEEGPEQQAEQALVNNDSPSQASISSRHSGSDMSLDSPGSEDDSDAEAVPRWMIPANRVRSAVDMLVSQARNRDGGIATLLRRENFLQRVRSMVFSQDRIRGRASDDANNADVINTVPDDTSEASPPPPLDVDMEEGVRFDTNLPAEHSYFGTNLNRVPGVDYLEVGSTHRMLIFMHQHILFPGEVLPFMIDGNIIDEEIEDTGRDGVIFGVGFPLMQPPDDNPHKLYGVTCQIYEKGESGRQHVFYKSRALQRIVINCDDIQGPPQYIARNPTMKCYSKVKILPEYFLPEPLKCIDMGSLNRFRDIPSMQEKFRRFQLTTTPWPVEACGEYSFEHIVEKARQKLEIHKIDTMPKCPIQLSFWLVRNLHLTEKMMRLTFLTDSVNIRLQIIGTTLKHESLFYCRYCNSSLAYCSDLFAMSKHGVQTQYCNSAGYIHETNTVYRVIAHAIGYSGEPSTEFSWFPGYQWHIIICKFCAQHVGWEFKAVEPNLAPKVFFGLAGSSVRIGKTSERTPTHGSRFVVRNLLRLVSRELE.

The segment covering 1-11 has biased composition (acidic residues); the sequence is MDDEETAEIDE. Disordered regions lie at residues 1–78, 118–194, and 249–276; these read MDDE…TTAH, EDAG…AVPR, and DDAN…LDVD. Low complexity-rich tracts occupy residues 12–33 and 125–139; these read TSSS…TETA and VPQN…TPPA. Residues 156-177 show a composition bias toward polar residues; it reads LVNNDSPSQASISSRHSGSDMS. Residues 314–542 enclose the Lon N-terminal domain; the sequence is RMLIFMHQHI…IIGTTLKHES (229 aa). Residues 541 to 650 form the CULT domain; the sequence is ESLFYCRYCN…LAGSSVRIGK (110 aa). Zn(2+) is bound by residues cysteine 546, cysteine 549, cysteine 615, and cysteine 618.

Belongs to the CRBN family. In terms of assembly, likely a component of a DCX (DDB1-CUL4-X-box) protein ligase complex. May interact with pic/DDB1. In terms of processing, ubiquitinated.

It is found in the nucleus. Its pathway is protein modification; protein ubiquitination. In terms of biological role, substrate recognition component of a DCX (DDB1-CUL4-X-box) E3 protein ligase complex that mediates the ubiquitination and subsequent proteasomal degradation of target proteins. Has an essential role in mediating growth by negatively regulating insulin signaling. It also has a role in maintaining presynaptic function in the neuromuscular junction synapses of third-instar larvae. The polypeptide is Protein cereblon (Drosophila mojavensis (Fruit fly)).